A 207-amino-acid chain; its full sequence is Large ribosomal subunit protein uL3 (207 aa).

The interval 129–152 (AGGPAGHGSRFQRHPGSIGSNTTP) is disordered.

This sequence belongs to the universal ribosomal protein uL3 family. As to quaternary structure, part of the 50S ribosomal subunit. Forms a cluster with proteins L14 and L19.

In terms of biological role, one of the primary rRNA binding proteins, it binds directly near the 3'-end of the 23S rRNA, where it nucleates assembly of the 50S subunit. This chain is Large ribosomal subunit protein uL3, found in Leptospira biflexa serovar Patoc (strain Patoc 1 / ATCC 23582 / Paris).